The primary structure comprises 148 residues: Single-stranded DNA-binding protein, mitochondrial (148 aa).

Residues Met1 to His16 constitute a mitochondrion transit peptide. The region spanning Leu30–Ser141 is the SSB domain. Phosphoserine occurs at positions 67 and 79. Lys113 carries the N6-acetyllysine modification. Lys122 carries the N6-succinyllysine modification.

Homotetramer. Interacts with MPG/AAG, through inhibition of its glycosylase activity it potentially prevents formation of DNA breaks in ssDNA, ensuring that base removal primarily occurs in dsDNA. Interacts with POLDIP2. Interacts with PRIMPOL.

The protein resides in the mitochondrion. Its subcellular location is the mitochondrion matrix. It localises to the mitochondrion nucleoid. Functionally, binds preferentially and cooperatively to pyrimidine rich single-stranded DNA (ss-DNA). In vitro, required to maintain the copy number of mitochondrial DNA (mtDNA) and plays a crucial role during mtDNA replication by stimulating the activity of the replisome components POLG and TWNK at the replication fork. Promotes the activity of the gamma complex polymerase POLG, largely by organizing the template DNA and eliminating secondary structures to favor ss-DNA conformations that facilitate POLG activity. In addition it is able to promote the 5'-3' unwinding activity of the mtDNA helicase TWNK. May also function in mtDNA repair. The polypeptide is Single-stranded DNA-binding protein, mitochondrial (SSBP1) (Oryctolagus cuniculus (Rabbit)).